The following is a 295-amino-acid chain: Protoheme IX farnesyltransferase (295 aa).

9 helical membrane-spanning segments follow: residues 24-44 (IMYL…GSMH), 45-65 (PFLA…AGAI), 94-114 (SALE…AIAV), 117-137 (ISAA…TIWL), 144-164 (NIVI…AAVT), 171-191 (SFIL…ALSL), 216-236 (KYIL…ALFL), 240-260 (LLYL…AVSV), and 272-292 (MFSY…FCSI).

The protein belongs to the UbiA prenyltransferase family. Protoheme IX farnesyltransferase subfamily.

Its subcellular location is the cell membrane. It catalyses the reaction heme b + (2E,6E)-farnesyl diphosphate + H2O = Fe(II)-heme o + diphosphate. It participates in porphyrin-containing compound metabolism; heme O biosynthesis; heme O from protoheme: step 1/1. Functionally, converts heme B (protoheme IX) to heme O by substitution of the vinyl group on carbon 2 of heme B porphyrin ring with a hydroxyethyl farnesyl side group. The sequence is that of Protoheme IX farnesyltransferase from Wolbachia pipientis wMel.